The chain runs to 214 residues: ATP-dependent Clp protease proteolytic subunit (214 aa).

Serine 113 acts as the Nucleophile in catalysis. Histidine 138 is a catalytic residue.

This sequence belongs to the peptidase S14 family. As to quaternary structure, fourteen ClpP subunits assemble into 2 heptameric rings which stack back to back to give a disk-like structure with a central cavity, resembling the structure of eukaryotic proteasomes.

The protein localises to the cytoplasm. It catalyses the reaction Hydrolysis of proteins to small peptides in the presence of ATP and magnesium. alpha-casein is the usual test substrate. In the absence of ATP, only oligopeptides shorter than five residues are hydrolyzed (such as succinyl-Leu-Tyr-|-NHMec, and Leu-Tyr-Leu-|-Tyr-Trp, in which cleavage of the -Tyr-|-Leu- and -Tyr-|-Trp bonds also occurs).. Cleaves peptides in various proteins in a process that requires ATP hydrolysis. Has a chymotrypsin-like activity. Plays a major role in the degradation of misfolded proteins. The chain is ATP-dependent Clp protease proteolytic subunit from Alkalilimnicola ehrlichii (strain ATCC BAA-1101 / DSM 17681 / MLHE-1).